Here is a 322-residue protein sequence, read N- to C-terminus: UDP-N-acetylenolpyruvoylglucosamine reductase (322 aa).

Positions 36–202 (RAGGPAQVLF…TSVLFEGVPG (167 aa)) constitute an FAD-binding PCMH-type domain. R182 is an active-site residue. S231 serves as the catalytic Proton donor. The active site involves E301.

This sequence belongs to the MurB family. FAD is required as a cofactor.

The protein resides in the cytoplasm. It carries out the reaction UDP-N-acetyl-alpha-D-muramate + NADP(+) = UDP-N-acetyl-3-O-(1-carboxyvinyl)-alpha-D-glucosamine + NADPH + H(+). The protein operates within cell wall biogenesis; peptidoglycan biosynthesis. Cell wall formation. The polypeptide is UDP-N-acetylenolpyruvoylglucosamine reductase (Brucella melitensis biotype 2 (strain ATCC 23457)).